We begin with the raw amino-acid sequence, 302 residues long: HTH-type transcriptional regulator AbgR (302 aa).

The HTH lysR-type domain maps to 5–62 (VKIHQIRAFVEVARQGSIRGASRMLNMSQPALSKSIQELEEGLAAQLFFRRSKGVTLT). Positions 22–41 (IRGASRMLNMSQPALSKSIQ) form a DNA-binding region, H-T-H motif.

This sequence belongs to the LysR transcriptional regulatory family.

Its function is as follows. Could be the regulator of the abg operon. This Escherichia coli (strain K12) protein is HTH-type transcriptional regulator AbgR (abgR).